The primary structure comprises 323 residues: RNA polymerase II holoenzyme cyclin-like subunit (323 aa).

Residues 45 to 176 (DSKQNGIEQS…LLEELESYLI (132 aa)) enclose the Cyclin N-terminal domain.

It belongs to the cyclin family. Cyclin C subfamily. Component of the SRB8-11 complex which consists of SRB8, SSN2/SRB9, SSN3/SRB10 and SSN8/SRB11. The SRB8-11 complex associates with the Mediator complex. The SSN3/SRB10 and SSN8/SRB11 kinase-cyclin pair also associate with the RNA polymerase II holoenzyme. Interacts with ASK10.

Its subcellular location is the nucleus. In terms of biological role, component of the SRB8-11 complex. The SRB8-11 complex is a regulatory module of the Mediator complex which is itself involved in regulation of basal and activated RNA polymerase II-dependent transcription. The SRB8-11 complex may be involved in the transcriptional repression of a subset of genes regulated by Mediator. It may inhibit the association of the Mediator complex with RNA polymerase II to form the holoenzyme complex. The SRB8-11 complex phosphorylates the C-terminal domain (CTD) of the largest subunit of RNA polymerase II RPB1 at serines 2 and 5. The SSN3/SRB10 and SSN8/SRB11 kinase-cyclin pair may also positively and negatively regulate numerous transcriptional activators in response to changes in nutritional and physiological conditions. In Saccharomyces cerevisiae (strain ATCC 204508 / S288c) (Baker's yeast), this protein is RNA polymerase II holoenzyme cyclin-like subunit (SSN8).